The chain runs to 81 residues: Small ribosomal subunit protein eS21 (81 aa).

This sequence belongs to the eukaryotic ribosomal protein eS21 family.

The chain is Small ribosomal subunit protein eS21 (RPS21) from Zea mays (Maize).